Reading from the N-terminus, the 376-residue chain is MSGKSPAQTRVVVGMSGGVDSSVTALLLKEQGYDVIGVFMKNWDDTDENGVCTATEDYKDVAAVADQIGVPYYSVNFEKEYWDRVFEYFLAEYRAGRTPNPDVMCNKEIKFKAFLDYAMELGADYVATGHYAQVRTDEDGTVHMLRGADNNKDQTYFLSQLTQEQLKKTMFPLGHLEKPEVRRIAEKAGLATAKKKDSTGICFIGEKNFKKFLGEYLPAQPGKMMTLDGVEMGNHAGLMYYTIGQRGGLGIGGQHGQLTSDPWFVVGKDLTTNTLYVGQGFHHEHLYSTSLDASDLSFTREMPETFDLHCTAKFRYRQEDTGVTIHVNGDKVTVDFDEPVRAITPGQAVVFYDGEECLGGAMIDVAYKEQKVMQYQ.

ATP contacts are provided by residues Gly-14–Ser-21 and Met-40. Positions Asn-100 to Asp-102 are interaction with target base in tRNA. The active-site Nucleophile is the Cys-105. The cysteines at positions 105 and 202 are disulfide-linked. Gly-129 contacts ATP. Positions Lys-152–Gln-154 are interaction with tRNA. Residue Cys-202 is the Cysteine persulfide intermediate of the active site. The interaction with tRNA stretch occupies residues Arg-315–Tyr-316.

It belongs to the MnmA/TRMU family.

It is found in the cytoplasm. The enzyme catalyses S-sulfanyl-L-cysteinyl-[protein] + uridine(34) in tRNA + AH2 + ATP = 2-thiouridine(34) in tRNA + L-cysteinyl-[protein] + A + AMP + diphosphate + H(+). Its function is as follows. Catalyzes the 2-thiolation of uridine at the wobble position (U34) of tRNA, leading to the formation of s(2)U34. The polypeptide is tRNA-specific 2-thiouridylase MnmA (Lactococcus lactis subsp. cremoris (strain MG1363)).